The chain runs to 340 residues: MLIAQRPSLTEEVVDEFRSRFVIEPLEPGFGYTLGNSLRRTLLSSIPGAAVTSIRIDGVLHEFTTVPGVKEDVTDLILNIKQLVVSSEHDEPVVMYLRKQGPGLVTAADIAPPAGVEVHNPDLVLATLNAKGKLEMELTVERGRGYVSAVQNKQVGQEIGRIPVDSIYSPVLKVTYKVEATRVEQRTDFDKLIVDVETKQAMRPRDAMASAGKTLVELFGLARELNIDAEGIDMGPSPTDAALAADLALPIEELELTVRSYNCLKREGIHSVGELVARSEADLLDIRNFGAKSIDEVKAKLAGMGLALKDSPPGFDPTAAADAFGADDDADAGFVETEQY.

Residues 1 to 226 (MLIAQRPSLT…ELFGLARELN (226 aa)) form an alpha N-terminal domain (alpha-NTD) region. The alpha C-terminal domain (alpha-CTD) stretch occupies residues 243-340 (LAADLALPIE…DAGFVETEQY (98 aa)).

The protein belongs to the RNA polymerase alpha chain family. Homodimer. The RNAP catalytic core consists of 2 alpha, 1 beta, 1 beta' and 1 omega subunit. When a sigma factor is associated with the core the holoenzyme is formed, which can initiate transcription. Post-translationally, the last 19 amino acids in the C-terminal part are cleaved in the spore.

It catalyses the reaction RNA(n) + a ribonucleoside 5'-triphosphate = RNA(n+1) + diphosphate. Functionally, DNA-dependent RNA polymerase catalyzes the transcription of DNA into RNA using the four ribonucleoside triphosphates as substrates. In Streptomyces granaticolor, this protein is DNA-directed RNA polymerase subunit alpha.